We begin with the raw amino-acid sequence, 258 residues long: Terpene cyclase macJ (258 aa).

Transmembrane regions (helical) follow at residues 29 to 49, 58 to 78, 83 to 103, 124 to 144, 151 to 171, 181 to 201, and 220 to 240; these read VPDG…ILMA, YAMP…YGFV, LLNQ…FYAI, IIVV…ATFI, VVFM…IAQL, SWGI…CFFW, and FLLL…VYVQ.

It belongs to the paxB family.

Its subcellular location is the membrane. It participates in secondary metabolite biosynthesis; terpenoid biosynthesis. In terms of biological role, terpene cyclase; part of the gene cluster that mediates the biosynthesis of macrophorins, isoprenoid epoxycyclohexenones containing cyclized drimane moieties. The first step of the pathway is the synthesis of 6-methylsalicylic acid (6-MSA) by the polyketide synthase macA. 6-MSA is then converted to m-cresol by the decarboxylase macB. The cytochrome P450 monooxygenase macC then catalyzes the oxidation of m-cresol to toluquinol. Epoxidation of toluquinol is then performed by the short chain dehydrogenase macD, with the help of macE, and a further prenylation by macG leads to 7-deacetoxyyanuthone A. The next step is the hydroxylation of C-22 of 7-deacetoxyyanuthone A by the cytochrome P450 monooxygenase macH to yield 22-deacetylyanuthone A. O-Mevalon transferase macI then attaches mevalon to the hydroxyl group of 22-deacetylyanuthone A to produce yanuthone E. The terpene cyclase macJ catalyzes the cyclization of 22-deacetylyanuthone A to macrophorin A. MacJ is also able to catalyze cyclization of yanuthone E and 7-deacetoxyyanuthone A to their corresponding macrophorins. The macJ products can be further modified by macH and macJ, as well as by the FAD-dependent monooxygenase macF, to produce additional macrophorins, including 4'-oxomacrophorin A, 4'-oxomacrophorin D and 4'-oxomacrophorin E. This chain is Terpene cyclase macJ, found in Penicillium terrestre.